We begin with the raw amino-acid sequence, 516 residues long: Putative Rieske 2Fe-2S iron-sulfur protein MT3926 (516 aa).

A Rieske domain is found at 429-516 (LYTFFKCLTD…RGHQLRSSRP (88 aa)). [2Fe-2S] cluster is bound by residues C469, H471, C489, and H492.

Requires [2Fe-2S] cluster as cofactor.

The polypeptide is Putative Rieske 2Fe-2S iron-sulfur protein MT3926 (Mycobacterium tuberculosis (strain CDC 1551 / Oshkosh)).